The sequence spans 241 residues: Small ribosomal subunit protein uS3 (241 aa).

A KH type-2 domain is found at Met39–Arg107. A disordered region spans residues Ala214–Ala241. Basic and acidic residues predominate over residues Ser229 to Ala241.

Belongs to the universal ribosomal protein uS3 family. Part of the 30S ribosomal subunit. Forms a tight complex with proteins S10 and S14.

In terms of biological role, binds the lower part of the 30S subunit head. Binds mRNA in the 70S ribosome, positioning it for translation. The sequence is that of Small ribosomal subunit protein uS3 from Rhizobium rhizogenes (strain K84 / ATCC BAA-868) (Agrobacterium radiobacter).